We begin with the raw amino-acid sequence, 78 residues long: UPF0349 protein BPUM_2879 (78 aa).

It belongs to the UPF0349 family.

This is UPF0349 protein BPUM_2879 from Bacillus pumilus (strain SAFR-032).